Here is a 912-residue protein sequence, read N- to C-terminus: Serine/threonine-protein kinase D1 (912 aa).

The residue at position 95 (Tyr-95) is a Phosphotyrosine. The segment at 146 to 196 (PHALFVHSYRAPAFCDHCGEMLWGLVRQGLKCEGCGLNYHKRCAFKIPNNC) adopts a Phorbol-ester/DAG-type 1 zinc-finger fold. Residues Ser-205, Ser-208, Ser-219, and Ser-223 each carry the phosphoserine modification. The segment at 270–320 (PHTFVIHSYTRPTVCQYCKKLLKGLFRQGLQCKDCRFNCHKRCAPKVPNNC) adopts a Phorbol-ester/DAG-type 2 zinc-finger fold. Ser-345 is modified (phosphoserine). The disordered stretch occupies residues 377 to 402 (NDSGEMQDPDPDHEDANRTISPSTSN). 2 positions are modified to phosphoserine; by MAPK13: Ser-397 and Ser-401. The 120-residue stretch at 422-541 (TVMKEGWMVH…WEIAIQHALM (120 aa)) folds into the PH domain. Tyr-432 is modified (phosphotyrosine). Phosphoserine is present on Ser-448. The residue at position 463 (Tyr-463) is a Phosphotyrosine; by ABL. The residue at position 473 (Ser-473) is a Phosphoserine. Tyr-502 is modified (phosphotyrosine). A Phosphoserine modification is found at Ser-548. One can recognise a Protein kinase domain in the interval 583 to 839 (IFPDEVLGSG…VDKTLSHPWL (257 aa)). ATP is bound by residues 589–597 (LGSGQFGIV) and Lys-612. Asp-706 acts as the Proton acceptor in catalysis. Ser-738 is modified (phosphoserine; by PKC/PRKCD). Phosphoserine; by autocatalysis and PKC/PRKCD is present on Ser-742. Residue Tyr-749 is modified to Phosphotyrosine. Ser-910 is subject to Phosphoserine; by autocatalysis.

This sequence belongs to the protein kinase superfamily. CAMK Ser/Thr protein kinase family. PKD subfamily. As to quaternary structure, interacts (via N-terminus) with ADAP1/CENTA1. Interacts with MAPK13. Interacts with DAPK1 in an oxidative stress-regulated manner. Interacts with USP28; the interaction induces phosphorylation of USP28 and activated KRAS-mediated stabilization of ZNF304. Interacts with AKAP13 (via C-terminal domain). Mg(2+) serves as cofactor. In terms of processing, phosphorylated at Ser-397 and Ser-401 by MAPK13 during regulation of insulin secretion in pancreatic beta cells. Phosphorylated by DAPK1. Phosphorylated at Tyr-95 and by ABL at Tyr-463, which primes the kinase in response to oxidative stress, and promotes a second step activating phosphorylation at Ser-738/Ser-742 by PKRD. Phosphorylated on Ser-910 upon S.enterica infection in macrophages.

It localises to the cytoplasm. Its subcellular location is the cell membrane. The protein resides in the golgi apparatus. It is found in the trans-Golgi network. It carries out the reaction L-seryl-[protein] + ATP = O-phospho-L-seryl-[protein] + ADP + H(+). It catalyses the reaction L-threonyl-[protein] + ATP = O-phospho-L-threonyl-[protein] + ADP + H(+). Its activity is regulated as follows. Activated by DAG and phorbol esters. Phorbol-ester/DAG-type domain 1 binds DAG with high affinity and appears to play the dominant role in mediating translocation to the cell membrane and trans-Golgi network. Phorbol-ester/DAG-type domain 2 binds phorbol ester with higher affinity. Autophosphorylation of Ser-742 and phosphorylation of Ser-738 by PKC relieves auto-inhibition by the PH domain. Phosphorylation on Tyr-463 by the SRC-ABL1 pathway in response to oxidative stress, is also required for activation. Activated by DAPK1 under oxidative stress. Its function is as follows. Serine/threonine-protein kinase that converts transient diacylglycerol (DAG) signals into prolonged physiological effects downstream of PKC, and is involved in the regulation of MAPK8/JNK1 and Ras signaling, Golgi membrane integrity and trafficking, cell survival through NF-kappa-B activation, cell migration, cell differentiation by mediating HDAC7 nuclear export, cell proliferation via MAPK1/3 (ERK1/2) signaling, and plays a role in cardiac hypertrophy, VEGFA-induced angiogenesis, genotoxic-induced apoptosis and flagellin-stimulated inflammatory response. Phosphorylates the epidermal growth factor receptor (EGFR) on dual threonine residues, which leads to the suppression of epidermal growth factor (EGF)-induced MAPK8/JNK1 activation and subsequent JUN phosphorylation. Phosphorylates RIN1, inducing RIN1 binding to 14-3-3 proteins YWHAB, YWHAE and YWHAZ and increased competition with RAF1 for binding to GTP-bound form of Ras proteins (NRAS, HRAS and KRAS). Acts downstream of the heterotrimeric G-protein beta/gamma-subunit complex to maintain the structural integrity of the Golgi membranes, and is required for protein transport along the secretory pathway. In the trans-Golgi network (TGN), regulates the fission of transport vesicles that are on their way to the plasma membrane. May act by activating the lipid kinase phosphatidylinositol 4-kinase beta (PI4KB) at the TGN for the local synthesis of phosphorylated inositol lipids, which induces a sequential production of DAG, phosphatidic acid (PA) and lyso-PA (LPA) that are necessary for membrane fission and generation of specific transport carriers to the cell surface. Under oxidative stress, is phosphorylated at Tyr-463 via SRC-ABL1 and contributes to cell survival by activating IKK complex and subsequent nuclear translocation and activation of NFKB1. Involved in cell migration by regulating integrin alpha-5/beta-3 recycling and promoting its recruitment in newly forming focal adhesion. In osteoblast differentiation, mediates the bone morphogenetic protein 2 (BMP2)-induced nuclear export of HDAC7, which results in the inhibition of HDAC7 transcriptional repression of RUNX2. In neurons, plays an important role in neuronal polarity by regulating the biogenesis of TGN-derived dendritic vesicles, and is involved in the maintenance of dendritic arborization and Golgi structure in hippocampal cells. May potentiate mitogenesis induced by the neuropeptide bombesin or vasopressin by mediating an increase in the duration of MAPK1/3 (ERK1/2) signaling, which leads to accumulation of immediate-early gene products including FOS that stimulate cell cycle progression. Plays an important role in the proliferative response induced by low calcium in keratinocytes, through sustained activation of MAPK1/3 (ERK1/2) pathway. Downstream of novel PKC signaling, plays a role in cardiac hypertrophy by phosphorylating HDAC5, which in turn triggers XPO1/CRM1-dependent nuclear export of HDAC5, MEF2A transcriptional activation and induction of downstream target genes that promote myocyte hypertrophy and pathological cardiac remodeling. Mediates cardiac troponin I (TNNI3) phosphorylation at the PKA sites, which results in reduced myofilament calcium sensitivity, and accelerated crossbridge cycling kinetics. The PRKD1-HDAC5 pathway is also involved in angiogenesis by mediating VEGFA-induced specific subset of gene expression, cell migration, and tube formation. In response to VEGFA, is necessary and required for HDAC7 phosphorylation which induces HDAC7 nuclear export and endothelial cell proliferation and migration. During apoptosis induced by cytarabine and other genotoxic agents, PRKD1 is cleaved by caspase-3 at Asp-378, resulting in activation of its kinase function and increased sensitivity of cells to the cytotoxic effects of genotoxic agents. In epithelial cells, is required for transducing flagellin-stimulated inflammatory responses by binding and phosphorylating TLR5, which contributes to MAPK14/p38 activation and production of inflammatory cytokines. Acts as an activator of NLRP3 inflammasome assembly by mediating phosphorylation of NLRP3. May play a role in inflammatory response by mediating activation of NF-kappa-B. May be involved in pain transmission by directly modulating TRPV1 receptor. Plays a role in activated KRAS-mediated stabilization of ZNF304 in colorectal cancer (CRC) cells. Regulates nuclear translocation of transcription factor TFEB in macrophages upon live S.enterica infection. In Homo sapiens (Human), this protein is Serine/threonine-protein kinase D1 (PRKD1).